The primary structure comprises 544 residues: Hydroxylamine reductase (544 aa).

[4Fe-4S] cluster contacts are provided by Cys-3, Cys-6, Cys-15, and Cys-21. The hybrid [4Fe-2O-2S] cluster site is built by His-244, Glu-268, Cys-313, Cys-400, Cys-428, Cys-453, Glu-487, and Lys-489. Cys-400 is modified (cysteine persulfide).

Belongs to the HCP family. Requires [4Fe-4S] cluster as cofactor. It depends on hybrid [4Fe-2O-2S] cluster as a cofactor.

Its subcellular location is the cytoplasm. It carries out the reaction A + NH4(+) + H2O = hydroxylamine + AH2 + H(+). Functionally, catalyzes the reduction of hydroxylamine to form NH(3) and H(2)O. This Trichormus variabilis (strain ATCC 29413 / PCC 7937) (Anabaena variabilis) protein is Hydroxylamine reductase.